The following is a 214-amino-acid chain: Guanylate kinase (214 aa).

In terms of domain architecture, Guanylate kinase-like spans 6–192; it reads GTLYIISAPS…ALEDLKAIFR (187 aa). 13 to 20 provides a ligand contact to ATP; sequence APSGAGKT.

The protein belongs to the guanylate kinase family.

It localises to the cytoplasm. It carries out the reaction GMP + ATP = GDP + ADP. Functionally, essential for recycling GMP and indirectly, cGMP. This is Guanylate kinase from Pseudomonas savastanoi pv. phaseolicola (strain 1448A / Race 6) (Pseudomonas syringae pv. phaseolicola (strain 1448A / Race 6)).